Consider the following 491-residue polypeptide: Glycogen synthase 2 (491 aa).

K16 provides a ligand contact to ADP-alpha-D-glucose.

The protein belongs to the glycosyltransferase 1 family. Bacterial/plant glycogen synthase subfamily.

The enzyme catalyses [(1-&gt;4)-alpha-D-glucosyl](n) + ADP-alpha-D-glucose = [(1-&gt;4)-alpha-D-glucosyl](n+1) + ADP + H(+). It participates in glycan biosynthesis; glycogen biosynthesis. Functionally, synthesizes alpha-1,4-glucan chains using ADP-glucose. In Nitrosococcus oceani (strain ATCC 19707 / BCRC 17464 / JCM 30415 / NCIMB 11848 / C-107), this protein is Glycogen synthase 2.